Here is a 165-residue protein sequence, read N- to C-terminus: uncharacterized protein (165 aa).

The segment at 49 to 165 (QLKPQGPKRP…VAQQREIAQK (117 aa)) is disordered. Over residues 94-106 (MNNNNNYKISYTS) the composition is skewed to polar residues. Low complexity predominate over residues 120 to 135 (TLQRTTPQAQPTPQQP). The segment covering 139–157 (SRSSGGITGAVNNRPQMVA) has biased composition (polar residues).

This is an uncharacterized protein from Caenorhabditis elegans.